Consider the following 546-residue polypeptide: Chaperonin GroEL 4 (546 aa).

ATP-binding positions include 30–33 (TLGP), lysine 51, 87–91 (DGTTT), glycine 415, and aspartate 495. The tract at residues 524–546 (APKDTPAAGQPGGPGAGGPGLDF) is disordered. Over residues 533 to 546 (QPGGPGAGGPGLDF) the composition is skewed to gly residues.

Belongs to the chaperonin (HSP60) family. Forms a cylinder of 14 subunits composed of two heptameric rings stacked back-to-back. Interacts with the co-chaperonin GroES.

It localises to the cytoplasm. The enzyme catalyses ATP + H2O + a folded polypeptide = ADP + phosphate + an unfolded polypeptide.. Functionally, together with its co-chaperonin GroES, plays an essential role in assisting protein folding. The GroEL-GroES system forms a nano-cage that allows encapsulation of the non-native substrate proteins and provides a physical environment optimized to promote and accelerate protein folding. This Paraburkholderia xenovorans (strain LB400) protein is Chaperonin GroEL 4.